The following is a 135-amino-acid chain: Small ribosomal subunit protein uS11 (135 aa).

Over residues 1 to 10 (MPPKTRSQTG) the composition is skewed to polar residues. A disordered region spans residues 1 to 28 (MPPKTRSQTGAKKVRRKEKKNVAHGHAH). Positions 12 to 28 (KKVRRKEKKNVAHGHAH) are enriched in basic residues.

The protein belongs to the universal ribosomal protein uS11 family. Part of the 30S ribosomal subunit. Interacts with proteins S7 and S18. Binds to IF-3.

Located on the platform of the 30S subunit, it bridges several disparate RNA helices of the 16S rRNA. Forms part of the Shine-Dalgarno cleft in the 70S ribosome. This chain is Small ribosomal subunit protein uS11, found in Acidothermus cellulolyticus (strain ATCC 43068 / DSM 8971 / 11B).